The following is a 334-amino-acid chain: Glyoxylate reductase (334 aa).

Residues 158 to 161 (FGRI), 180 to 182 (SRT), and 239 to 241 (IAR) each bind NADP(+). Catalysis depends on residues arginine 241 and glutamate 270. The active-site Proton donor is histidine 288. 288–290 (HIG) contributes to the NADP(+) binding site.

It belongs to the D-isomer specific 2-hydroxyacid dehydrogenase family. GyaR subfamily. As to quaternary structure, homodimer.

The protein resides in the cytoplasm. The catalysed reaction is glycolate + NAD(+) = glyoxylate + NADH + H(+). The chain is Glyoxylate reductase from Thermococcus gammatolerans (strain DSM 15229 / JCM 11827 / EJ3).